The chain runs to 391 residues: DNA replication and repair protein RecF (391 aa).

ATP is bound at residue 30–37; that stretch reads GLNGQGKT.

It belongs to the RecF family.

The protein localises to the cytoplasm. In terms of biological role, the RecF protein is involved in DNA metabolism; it is required for DNA replication and normal SOS inducibility. RecF binds preferentially to single-stranded, linear DNA. It also seems to bind ATP. This is DNA replication and repair protein RecF from Kineococcus radiotolerans (strain ATCC BAA-149 / DSM 14245 / SRS30216).